We begin with the raw amino-acid sequence, 99 residues long: SAGA-associated factor 11 (99 aa).

Residues 71–92 (IHCENCGRDVSANRLAAHLQRC) form an SGF11-type zinc finger.

This sequence belongs to the SGF11 family. In terms of assembly, component of the 1.8 MDa SAGA transcription coactivator-HAT complex. SAGA is built of 5 distinct domains with specialized functions. Within the SAGA complex, SUS1, SGF11, SGF73 and UBP8 form an additional subcomplex of SAGA called the DUB module (deubiquitination module). Interacts directly with SGF73, SUS1 and UBP8.

The protein localises to the nucleus. In terms of biological role, functions as a component of the transcription regulatory histone acetylation (HAT) complex SAGA. At the promoters, SAGA is required for recruitment of the basal transcription machinery. It influences RNA polymerase II transcriptional activity through different activities such as TBP interaction and promoter selectivity, interaction with transcription activators, and chromatin modification through histone acetylation and deubiquitination. SAGA acetylates nucleosomal histone H3 to some extent (to form H3K9ac, H3K14ac, H3K18ac and H3K23ac). SAGA interacts with DNA via upstream activating sequences (UASs). Involved in transcriptional regulation of a subset of SAGA-regulated genes. Within the SAGA complex, participates in a subcomplex, that specifically deubiquitinates histones H2B. The protein is SAGA-associated factor 11 of Saccharomyces cerevisiae (strain YJM789) (Baker's yeast).